A 193-amino-acid polypeptide reads, in one-letter code: Holliday junction branch migration complex subunit RuvA (193 aa).

Residues 1–64 form a domain I region; the sequence is MIGRIAGTLL…EDAHLLYGFL (64 aa). Residues 65–139 form a domain II region; that stretch reads TPQERSTFRE…GKLGADLGPL (75 aa). The flexible linker stretch occupies residues 139–143; that stretch reads LAGAA. Residues 144 to 193 form a domain III region; sequence SPSDHAADILNALLALGYSEKEALAAIKNVPAGTGVSEGIKLSLKALSKA.

This sequence belongs to the RuvA family. In terms of assembly, homotetramer. Forms an RuvA(8)-RuvB(12)-Holliday junction (HJ) complex. HJ DNA is sandwiched between 2 RuvA tetramers; dsDNA enters through RuvA and exits via RuvB. An RuvB hexamer assembles on each DNA strand where it exits the tetramer. Each RuvB hexamer is contacted by two RuvA subunits (via domain III) on 2 adjacent RuvB subunits; this complex drives branch migration. In the full resolvosome a probable DNA-RuvA(4)-RuvB(12)-RuvC(2) complex forms which resolves the HJ.

It is found in the cytoplasm. The RuvA-RuvB-RuvC complex processes Holliday junction (HJ) DNA during genetic recombination and DNA repair, while the RuvA-RuvB complex plays an important role in the rescue of blocked DNA replication forks via replication fork reversal (RFR). RuvA specifically binds to HJ cruciform DNA, conferring on it an open structure. The RuvB hexamer acts as an ATP-dependent pump, pulling dsDNA into and through the RuvAB complex. HJ branch migration allows RuvC to scan DNA until it finds its consensus sequence, where it cleaves and resolves the cruciform DNA. This Burkholderia thailandensis (strain ATCC 700388 / DSM 13276 / CCUG 48851 / CIP 106301 / E264) protein is Holliday junction branch migration complex subunit RuvA.